We begin with the raw amino-acid sequence, 233 residues long: Lipoprotein-releasing system ATP-binding protein LolD (233 aa).

Residues 6–233 (LQCDNLCKRY…TAELSLMGAE (228 aa)) form the ABC transporter domain. 42 to 49 (GSSGSGKS) is an ATP binding site.

This sequence belongs to the ABC transporter superfamily. Lipoprotein translocase (TC 3.A.1.125) family. As to quaternary structure, the complex is composed of two ATP-binding proteins (LolD) and two transmembrane proteins (LolC and LolE).

The protein resides in the cell inner membrane. Part of the ABC transporter complex LolCDE involved in the translocation of mature outer membrane-directed lipoproteins, from the inner membrane to the periplasmic chaperone, LolA. Responsible for the formation of the LolA-lipoprotein complex in an ATP-dependent manner. The sequence is that of Lipoprotein-releasing system ATP-binding protein LolD from Shigella dysenteriae serotype 1 (strain Sd197).